The following is a 157-amino-acid chain: Class-10 pathogenesis-related protein 1 (157 aa).

This sequence belongs to the BetVI family. As to expression, high levels in roots and not detectable in hypocotyls, cotyledons, stems, leaves and flower buds of untreated plants. After induction, high levels are present in the vascular bundles of leaves.

Its subcellular location is the cytoplasm. The sequence is that of Class-10 pathogenesis-related protein 1 (MSPR10-1) from Medicago sativa (Alfalfa).